We begin with the raw amino-acid sequence, 206 residues long: Methylthioribulose-1-phosphate dehydratase (206 aa).

H96 and H98 together coordinate Zn(2+).

It belongs to the aldolase class II family. MtnB subfamily. It depends on Zn(2+) as a cofactor.

It carries out the reaction 5-(methylsulfanyl)-D-ribulose 1-phosphate = 5-methylsulfanyl-2,3-dioxopentyl phosphate + H2O. It participates in amino-acid biosynthesis; L-methionine biosynthesis via salvage pathway; L-methionine from S-methyl-5-thio-alpha-D-ribose 1-phosphate: step 2/6. Functionally, catalyzes the dehydration of methylthioribulose-1-phosphate (MTRu-1-P) into 2,3-diketo-5-methylthiopentyl-1-phosphate (DK-MTP-1-P). This Exiguobacterium sibiricum (strain DSM 17290 / CCUG 55495 / CIP 109462 / JCM 13490 / 255-15) protein is Methylthioribulose-1-phosphate dehydratase.